Reading from the N-terminus, the 147-residue chain is MITLIGEKLARKGSMFLFCGPAEKCRDCRFQPTCIAPLEEGRVYHINEVKDRYQRCPIHLGERVRVVDVEKANIEVLIDSKRAFEGSVISFEFPDCDVECSMRDLCFPEGVMEGDRCRIVKNLGKPGKQCPAGNELRRVLLRPLDKK.

It belongs to the UPF0179 family.

The polypeptide is UPF0179 protein MTH_609 (Methanothermobacter thermautotrophicus (strain ATCC 29096 / DSM 1053 / JCM 10044 / NBRC 100330 / Delta H) (Methanobacterium thermoautotrophicum)).